A 132-amino-acid chain; its full sequence is Small ribosomal subunit protein uS8c (132 aa).

Belongs to the universal ribosomal protein uS8 family. In terms of assembly, part of the 30S ribosomal subunit.

It localises to the plastid. The protein resides in the chloroplast. Its function is as follows. One of the primary rRNA binding proteins, it binds directly to 16S rRNA central domain where it helps coordinate assembly of the platform of the 30S subunit. The polypeptide is Small ribosomal subunit protein uS8c (rps8) (Huperzia lucidula (Shining clubmoss)).